The primary structure comprises 641 residues: MDGLQASAGPLRRGRPKRRRKPQPHSGSVLALPLRSRKIRKQLRSVVSRMAALRTQTLPSENSEESRVESTADDLGDALPGGAAVAAVPDAARREPYGHLGPAELLEASPAARSLQTPSARLVPASAPPARLVEVPAAPVRVVETSALLCTAQHLAAVQSSGAPATASGPQVDNTGGEPAWDSPLRRVLAELNRIPSSRRRAARLFEWLIAPMPPDHFYRRLWEREAVLVRRQDHTYYQGLFSTADLDSMLRNEEVQFGQHLDAARYINGRRETLNPPGRALPAAAWSLYQAGCSLRLLCPQAFSTTVWQFLAVLQEQFGSMAGSNVYLTPPNSQGFAPHYDDIEAFVLQLEGRKLWRVYRPRVPTEELALTSSPNFSQDDLGEPVLQTVLEPGDLLYFPRGFIHQAECQDGVHSLHLTLSTYQRNTWGDFLEAILPLAVQAAMEENVEFRRGLPRDFMDYMGAQHSDSKDPRRTAFMEKVRVLVARLGHFAPVDAVADQRAKDFIHDSLPPVLTDRERALSVYGLPIRWEAGEPVNVGAQLTTETEVHMLQDGIARLVGEGGHLFLYYTVENSRVYHLEEPKCLEIYPQQADAMELLLGSYPEFVRVGDLPCDSVEDQLSLATTLYDKGLLLTKMPLALN.

Residue Met1 is modified to N-acetylmethionine. 2 disordered regions span residues 1–35 and 54–80; these read MDGL…LPLR and RTQT…DALP. The span at 12–23 shows a compositional bias: basic residues; it reads RRGRPKRRRKPQ. Ser60, Ser63, and Ser109 each carry phosphoserine. The region spanning 294–439 is the JmjC domain; it reads CSLRLLCPQA…DFLEAILPLA (146 aa). Residues His340, Asp342, and His405 each coordinate Fe cation.

It belongs to the ROX family. NO66 subfamily. In terms of assembly, interacts with SP7/OSX; the interaction is direct. Interacts with MYC. Interacts with PHF19; leading to its recruitment to H3K36me3 sites. Fe(2+) serves as cofactor. Widely expressed. Overexpressed in lung carcinomas.

It is found in the nucleus. Its subcellular location is the nucleolus. It localises to the nucleoplasm. It carries out the reaction N(6),N(6)-dimethyl-L-lysyl(36)-[histone H3] + 2 2-oxoglutarate + 2 O2 = L-lysyl(36)-[histone H3] + 2 formaldehyde + 2 succinate + 2 CO2. The catalysed reaction is N(6)-methyl-L-lysyl-[protein] + 2-oxoglutarate + O2 = L-lysyl-[protein] + formaldehyde + succinate + CO2. The enzyme catalyses L-histidyl-[protein] + 2-oxoglutarate + O2 = (3S)-3-hydroxy-L-histidyl-[protein] + succinate + CO2. Its function is as follows. Oxygenase that can act as both a histone lysine demethylase and a ribosomal histidine hydroxylase. Specifically demethylates 'Lys-4' (H3K4me) and 'Lys-36' (H3K36me) of histone H3, thereby playing a central role in histone code. Preferentially demethylates trimethylated H3 'Lys-4' (H3K4me3) and monomethylated H3 'Lys-4' (H3K4me1) residues, while it has weaker activity for dimethylated H3 'Lys-36' (H3K36me2). Acts as a regulator of osteoblast differentiation via its interaction with SP7/OSX by demethylating H3K4me and H3K36me, thereby inhibiting SP7/OSX-mediated promoter activation. Also catalyzes demethylation of non-histone proteins, such as CGAS: demethylation of monomethylated CGAS promotes interaction between CGAS and PARP1, followed by PARP1 inactivation. Also catalyzes the hydroxylation of 60S ribosomal protein L8 on 'His-216', thereby playing a role in ribosome biogenesis. Participates in MYC-induced transcriptional activation. The protein is Ribosomal oxygenase 1 of Homo sapiens (Human).